A 425-amino-acid polypeptide reads, in one-letter code: Adenylosuccinate synthetase (425 aa).

Residues 12-18 (GDEGKAK) and 40-42 (GHT) each bind GTP. Residue D13 is the Proton acceptor of the active site. Positions 13 and 40 each coordinate Mg(2+). Residues 13–16 (DEGK), 38–41 (NAGH), T130, R144, Q224, T239, and R303 each bind IMP. Catalysis depends on H41, which acts as the Proton donor. 299-305 (ATTGRPR) contacts substrate. Residues R305, 331–333 (KID), and 411–413 (STG) contribute to the GTP site.

This sequence belongs to the adenylosuccinate synthetase family. As to quaternary structure, homodimer. Mg(2+) is required as a cofactor.

The protein resides in the cytoplasm. The catalysed reaction is IMP + L-aspartate + GTP = N(6)-(1,2-dicarboxyethyl)-AMP + GDP + phosphate + 2 H(+). Its pathway is purine metabolism; AMP biosynthesis via de novo pathway; AMP from IMP: step 1/2. Its function is as follows. Plays an important role in the de novo pathway of purine nucleotide biosynthesis. Catalyzes the first committed step in the biosynthesis of AMP from IMP. In Leptospira interrogans serogroup Icterohaemorrhagiae serovar copenhageni (strain Fiocruz L1-130), this protein is Adenylosuccinate synthetase.